Consider the following 151-residue polypeptide: MKHVDIFTDGACSGNPGPGGWGAVLRYGDVEKELCGGEADTTNNRMELLAAISALSALKSPCEVDLYTDSAYVKDGISKWIFGWKKNGWKTADKKPVKNAELWQALEAARDRHKVTLHWVKGHAGHPENERADELARKGMEPFKKGKAVSF.

One can recognise an RNase H type-1 domain in the interval 1–141 (MKHVDIFTDG…ADELARKGME (141 aa)). Mg(2+) contacts are provided by Asp9, Glu47, Asp69, and Asp133.

This sequence belongs to the RNase H family. As to quaternary structure, monomer. Requires Mg(2+) as cofactor.

Its subcellular location is the cytoplasm. It carries out the reaction Endonucleolytic cleavage to 5'-phosphomonoester.. Its function is as follows. Endonuclease that specifically degrades the RNA of RNA-DNA hybrids. The sequence is that of Ribonuclease H from Rhizobium johnstonii (strain DSM 114642 / LMG 32736 / 3841) (Rhizobium leguminosarum bv. viciae).